Here is a 64-residue protein sequence, read N- to C-terminus: U2-aranetoxin-Av1a (64 aa).

Expressed in fat body, but not in cephalothorax, silk gland, midgut.

Functionally, insecticidal toxin. In Araneus ventricosus (Orbweaver spider), this protein is U2-aranetoxin-Av1a.